A 514-amino-acid polypeptide reads, in one-letter code: MYSQRFGTVQREVKGPTPKVVIVRSKPPKGQGAEHHLERIRRSHQKHNAILASIKSSERDRLKAEWDQHNDCKILDSLVRARIKDAVQGFIINIEERRNKLRELLALEENEYFTEMQLKKETIEEKKDRMREKTKLLKEKNEKERQDFVAEKLDQQFRERCEELRVELLSIHQKKVCEERKAQIAFNEELSRQKLVEEQMFSKLWEEDRLAKEKREAQEARRQKELMENTRLGLNAQITSIKAQRQATQLLKEEEARLVESNNAQIKHENEQDMLKKQKAKQETRTILQKALQERIEHIQQEYRDEQDLNMKLVQRALQDLQEEADKKKQKREDMIREQKIYHKYLAQRREEEKAQEKEFDRILEEDKAKKLAEKDKELRLEKEARRQLVDEVMCTRKLQVQEKLQREAKEQEERAMEQKHINESLKELNCEEKENFARRQRLAQEYRKQLQMQIAYQQQSQEAEKEEKRREFEAGVAANKMCLDKVQEVLSTHQVLPQNIHPMRKACPSKLPP.

Coiled-coil stretches lie at residues 91 to 148 (IINI…RQDF) and 203 to 474 (KLWE…REFE).

The protein belongs to the CFAP53 family. As to quaternary structure, microtubule inner protein component of sperm flagellar doublet microtubules. Interacts with PIERCE1 and PIERCE2; the interactions link outer dynein arms docking complex (ODA-DC) to the internal microtubule inner proteins (MIP) in cilium axoneme. Interacts with CCDC38. Interacts with CCDC42 and IFT88. Interacts with centriolar satellite proteins PIBF1/CEP90 and PCM1. Interacts with dyneins DNAIC1, DNAIC2 AND DNAH11 and with ODA-DC component ODAD4/TTC25. Expressed in skin fibroblasts (at protein level). Expressed in nasal respiratory epithelial cells (at protein level). Expressed in airway epithelial cells.

The protein localises to the cytoplasm. It localises to the cytoskeleton. The protein resides in the cilium axoneme. It is found in the flagellum axoneme. Its subcellular location is the microtubule organizing center. The protein localises to the centrosome. It localises to the centriole. The protein resides in the centriolar satellite. It is found in the spindle pole. Its subcellular location is the cell projection. The protein localises to the cilium. Microtubule inner protein (MIP) part of the dynein-decorated doublet microtubules (DMTs) in cilia axoneme, which is required for motile cilia beating. Regulates motility patterns of both 9+0 and 9+2 motile cilia through differential localization and recruitment of axonemal dynein components. Required for centriolar satellite integrity and non-motile cilium assembly. Required for motile cilium formation. Through its role in the beating of primary cilia, involved in the establishment of organ laterality during embryogenesis. Required for sperm flagellum biogenesis and is essential for male fertility. This is Cilia- and flagella-associated protein 53 from Homo sapiens (Human).